The sequence spans 388 residues: P2X purinoceptor 4 (388 aa).

Over 1–33 (MAGCCSVLGSFLFEYDTPRIVLIRSRKVGLMNR) the chain is Cytoplasmic. The helical transmembrane segment at 34-54 (AVQLLILAYVIGWVFVWEKGY) threads the bilayer. The Extracellular segment spans residues 55-338 (QETDSVVSSV…KFDIIPTMIN (284 aa)). ATP contacts are provided by K67 and K69. The CTP site is built by K67 and K69. Residues N75 and N110 are each glycosylated (N-linked (GlcNAc...) asparagine). 3 disulfides stabilise this stretch: C116–C165, C126–C149, and C132–C159. N-linked (GlcNAc...) asparagine glycans are attached at residues N153 and N184. ATP-binding residues include T186 and L188. T186 is a binding site for CTP. N-linked (GlcNAc...) asparagine glycosylation is found at N199 and N208. 2 disulfide bridges follow: C217–C227 and C261–C270. Residues N293, R295, and K313 each contribute to the ATP site. CTP contacts are provided by N293, R295, and K313. A helical transmembrane segment spans residues 339–359 (VGSGLALLGVATVLCDVIVLY). Topologically, residues 360–388 (CMKKKYYYRDKKYKYVEDYEQGLSGEMNQ) are cytoplasmic.

Belongs to the P2X receptor family. In terms of assembly, functional P2RXs are organized as homomeric and heteromeric trimers. Forms heterotrimer with P2RX1. Interacts with P2RX7 (via C-terminus); this interaction is functional only in the presence of ATP. Forms heterotrimer with P2RX4; functional differences between homomeric P2RX4 and P2RX4/6 heterotrimer are minor. Interacts with AP1M2. As to expression, widespread distribution in the brain. Strongly expressed in microglial cells. Also expressed in epithelial cells.

It localises to the cell membrane. It is found in the lysosome membrane. It carries out the reaction K(+)(in) = K(+)(out). The enzyme catalyses Na(+)(in) = Na(+)(out). The catalysed reaction is Ca(2+)(in) = Ca(2+)(out). With respect to regulation, activated by ATP. pH-dependent and inhibited by acidic pH. In terms of biological role, ATP-gated nonselective transmembrane cation channel permeable to potassium, sodium and calcium. CTP, but not GTP or UTP, functions as a weak affinity agonist for P2RX4. Activated by extracellularly released ATP, it plays multiple role in immunity and central nervous system physiology. Plays a key role in initial steps of T-cell activation and Ca(2+) microdomain formation. Also participates in basal T-cell activity without TCR/CD3 stimulation. Promotes the differentiation and activation of Th17 cells via expression of retinoic acid-related orphan receptor C/RORC. Upon activation, drives microglia motility via the PI3K/Akt pathway. Could also function as an ATP-gated cation channel of lysosomal membranes. The sequence is that of P2X purinoceptor 4 (P2rx4) from Rattus norvegicus (Rat).